We begin with the raw amino-acid sequence, 481 residues long: Zinc metalloproteinase/disintegrin (481 aa).

The first 20 residues, 1 to 20 (MIQVLLVTICLAVFPYQGSS), serve as a signal peptide directing secretion. Positions 21–190 (IILESGNVDD…KASQLYLTPE (170 aa)) are excised as a propeptide. A Peptidase M12B domain is found at 197–392 (RYIKLAIVVD…DNPQCILNAP (196 aa)). 3 cysteine pairs are disulfide-bonded: Cys-308–Cys-387, Cys-349–Cys-371, and Cys-351–Cys-354. His-333 is a binding site for Zn(2+). Glu-334 is an active-site residue. Residues His-337 and His-343 each contribute to the Zn(2+) site. The propeptide occupies 393–408 (LRTDTVSTPVSGNEFL). The Disintegrin domain occupies 400 to 481 (TPVSGNEFLE…GDCPRNPFHA (82 aa)). 6 disulfide bridges follow: Cys-414/Cys-429, Cys-416/Cys-424, Cys-423/Cys-446, Cys-437/Cys-443, Cys-442/Cys-467, and Cys-455/Cys-474. A Cell attachment site motif is present at residues 459–461 (RGD).

It belongs to the venom metalloproteinase (M12B) family. P-II subfamily. P-IIa sub-subfamily. In terms of assembly, monomer. It depends on Zn(2+) as a cofactor. As to expression, expressed by the venom gland.

Its subcellular location is the secreted. Its function is as follows. Impairs hemostasis in the envenomed animal. Functionally, disintegrin elegantin-2a-f: inhibits platelet aggregation induced by ADP, thrombin, platelet-activating factor and collagen. Acts by inhibiting fibrinogen interaction with platelet receptors GPIIb/GPIIIa (ITGA2B/ITGB3). This chain is Zinc metalloproteinase/disintegrin, found in Protobothrops elegans (Elegant pitviper).